Consider the following 46-residue polypeptide: Iota-conotoxin-like r11b (46 aa).

A 4-hydroxyproline mark is found at Pro-2 and Pro-11. 4 disulfides stabilise this stretch: Cys-5/Cys-19, Cys-12/Cys-22, Cys-18/Cys-27, and Cys-21/Cys-38. Pro-29 carries the post-translational modification 4-hydroxyproline. Phe-44 is modified (D-phenylalanine).

The natural D-Phe form of the peptide is more potent than the synthetic L-Phe form. In terms of tissue distribution, expressed by the venom duct.

It localises to the secreted. In terms of biological role, iota-conotoxins bind to voltage-gated sodium channels (Nav) and act as agonists by shifting the voltage-dependence of activation to more hyperpolarized levels. Produces excitatory symptoms when injected intracranially into mice and is lethal at higher doses. Exposure to frog cutaneous pectoris induces spontaneous and repetitive action potentials. This effect is slowly reversible. Natural peptide (with D-Phe) is active on nerve, but not on muscle. Synthetic peptide (with L-Phe) is not active on both nerve and muscle. The polypeptide is Iota-conotoxin-like r11b (Conus radiatus (Rayed cone)).